The primary structure comprises 84 residues: Toxin Aah4 (84 aa).

A signal peptide spans 1–19; sequence MNYLIMFSLALLLVIGVES. Residues 21 to 82 form the LCN-type CS-alpha/beta domain; that stretch reads RDGYIVDSKN…PIKDPSDDCH (62 aa). Cystine bridges form between cysteine 31-cysteine 81, cysteine 35-cysteine 53, cysteine 39-cysteine 63, and cysteine 43-cysteine 65. Position 84 (arginine 84) is a propeptide, removed by a carboxypeptidase.

It belongs to the long (4 C-C) scorpion toxin superfamily. Sodium channel inhibitor family. Alpha subfamily. In terms of tissue distribution, expressed by the venom gland.

The protein localises to the secreted. Alpha toxins bind voltage-independently at site-3 of sodium channels (Nav) and inhibit the inactivation of the activated channels, thereby blocking neuronal transmission. This toxin seems to specifically act on Nav1.6/SCN8A sodium channel. In vitro, it inhibits the proliferation of the prostate cancer cell line DU145 (IC(50)=15 uM). It shows low effect on the adhesion of DU145 cells to fibronectin (at 15 uM) and is inactive on DU145 cells migration. This Androctonus australis (Sahara scorpion) protein is Toxin Aah4.